The chain runs to 323 residues: DNA-directed RNA polymerase subunit alpha 1 (323 aa).

The alpha N-terminal domain (alpha-NTD) stretch occupies residues 1-228; it reads MSNNNSKQEF…EQISVFVSLR (228 aa). Residues 244–323 form an alpha C-terminal domain (alpha-CTD) region; that stretch reads IDPILLKPID…DNFRELVEGK (80 aa).

This sequence belongs to the RNA polymerase alpha chain family. As to quaternary structure, homodimer. The RNAP catalytic core consists of 2 alpha, 1 beta, 1 beta' and 1 omega subunit. When a sigma factor is associated with the core the holoenzyme is formed, which can initiate transcription.

It catalyses the reaction RNA(n) + a ribonucleoside 5'-triphosphate = RNA(n+1) + diphosphate. DNA-dependent RNA polymerase catalyzes the transcription of DNA into RNA using the four ribonucleoside triphosphates as substrates. This is DNA-directed RNA polymerase subunit alpha 1 from Francisella tularensis subsp. novicida (strain U112).